A 247-amino-acid polypeptide reads, in one-letter code: 3-oxoacyl-[acyl-carrier-protein] reductase MabA (247 aa).

NADP(+) is bound by residues 25–27 (RGI), Arg-47, 61–62 (DV), Gly-90, Tyr-153, Lys-157, Ile-186, and Arg-197. Residue Tyr-153 is the Proton acceptor of the active site.

It belongs to the short-chain dehydrogenases/reductases (SDR) family. In terms of assembly, homotetramer.

The protein localises to the secreted. It localises to the cell wall. The catalysed reaction is a (3R)-hydroxyacyl-[ACP] + NADP(+) = a 3-oxoacyl-[ACP] + NADPH + H(+). It participates in lipid metabolism; mycolic acid biosynthesis. Part of the mycobacterial fatty acid elongation system FAS-II, which is involved in mycolic acid biosynthesis. Catalyzes the NADPH-dependent reduction of beta-ketoacyl derivatives, the second step of the FAS-II elongation cycle. The polypeptide is 3-oxoacyl-[acyl-carrier-protein] reductase MabA (Mycobacterium bovis (strain ATCC BAA-935 / AF2122/97)).